The following is a 224-amino-acid chain: Ribonuclease HII (224 aa).

The RNase H type-2 domain maps to 21-223 (RAIAGIDEAG…IRNAALEGEQ (203 aa)). Positions 27, 28, and 124 each coordinate a divalent metal cation.

Belongs to the RNase HII family. The cofactor is Mn(2+). It depends on Mg(2+) as a cofactor.

The protein resides in the cytoplasm. The catalysed reaction is Endonucleolytic cleavage to 5'-phosphomonoester.. Functionally, endonuclease that specifically degrades the RNA of RNA-DNA hybrids. The chain is Ribonuclease HII from Roseiflexus castenholzii (strain DSM 13941 / HLO8).